We begin with the raw amino-acid sequence, 239 residues long: Cysteine-rich venom protein ophanin (239 aa).

The signal sequence occupies residues 1–18 (MIAFTLLSLAAVLQQSFG). The 129-residue stretch at 37–165 (VDLHNSLRRS…EYSYFYVCQY (129 aa)) folds into the SCP domain. Disulfide bonds link cysteine 74–cysteine 152, cysteine 91–cysteine 166, cysteine 147–cysteine 163, cysteine 185–cysteine 192, cysteine 188–cysteine 197, cysteine 201–cysteine 234, cysteine 210–cysteine 228, and cysteine 219–cysteine 232. The ShKT domain occupies 201–234 (CTLYNEYTNCDSLVKQSSCQDEWIKSKCPASCFC).

Expressed by the venom gland.

It is found in the secreted. In terms of biological role, weakly blocks contraction of smooth muscle elicited by high potassium-induced depolarization, but does not block caffeine-stimulated contraction. May target voltage-gated calcium channels on smooth muscle. This chain is Cysteine-rich venom protein ophanin, found in Ophiophagus hannah (King cobra).